A 59-amino-acid polypeptide reads, in one-letter code: Putative potassium channel toxin Ts25 (59 aa).

The first 22 residues, 1 to 22 (MKAFYGILIIFILISMIHLSQQ), serve as a signal peptide directing secretion. Cystine bridges form between Cys-29–Cys-50, Cys-35–Cys-55, and Cys-39–Cys-57.

Belongs to the short scorpion toxin superfamily. Potassium channel inhibitor family. Alpha-KTx 04 subfamily. In terms of tissue distribution, expressed by the venom gland.

It is found in the secreted. Its function is as follows. Potently blocks Kv1.1/KCNA1 (85%), Kv1.2/KCNA2 (91%), Kv1.3/KCNA3 (89%), Kv1.6/KCNA6 (94%), and Shaker (97%). The protein is Putative potassium channel toxin Ts25 of Tityus serrulatus (Brazilian scorpion).